The sequence spans 104 residues: MKRKASIMFVHQDKYEEYKQRHDDIWPEMAEALKAHGAHHYSIFLDEETGRLFAYLEIEDEEKWRKMADTEVCQRWWKSMAPLMKTNSDFSPVAIDLKEVFYLD.

Tyrosine 18 is a substrate binding site. Histidine 22 acts as the Proton donor in catalysis. Residues tyrosine 41 and 76–77 (WW) contribute to the substrate site.

Belongs to the rhamnose mutarotase family. As to quaternary structure, homodimer.

It localises to the cytoplasm. The enzyme catalyses alpha-L-rhamnose = beta-L-rhamnose. Its pathway is carbohydrate metabolism; L-rhamnose metabolism. Involved in the anomeric conversion of L-rhamnose. This Bacillus subtilis (strain 168) protein is L-rhamnose mutarotase.